Here is a 249-residue protein sequence, read N- to C-terminus: 2,3-bisphosphoglycerate-dependent phosphoglycerate mutase (249 aa).

Substrate is bound by residues 9–16 (RHGQSQWN), 22–23 (TG), arginine 61, 88–91 (ERHY), lysine 99, 115–116 (RR), and 184–185 (GN). The Tele-phosphohistidine intermediate role is filled by histidine 10. The Proton donor/acceptor role is filled by glutamate 88.

It belongs to the phosphoglycerate mutase family. BPG-dependent PGAM subfamily. Homodimer.

It catalyses the reaction (2R)-2-phosphoglycerate = (2R)-3-phosphoglycerate. It participates in carbohydrate degradation; glycolysis; pyruvate from D-glyceraldehyde 3-phosphate: step 3/5. Catalyzes the interconversion of 2-phosphoglycerate and 3-phosphoglycerate. The protein is 2,3-bisphosphoglycerate-dependent phosphoglycerate mutase of Xanthomonas euvesicatoria pv. vesicatoria (strain 85-10) (Xanthomonas campestris pv. vesicatoria).